A 130-amino-acid polypeptide reads, in one-letter code: Small ribosomal subunit protein uS11 (130 aa).

The protein belongs to the universal ribosomal protein uS11 family. Part of the 30S ribosomal subunit. Interacts with proteins S7 and S18. Binds to IF-3.

Functionally, located on the platform of the 30S subunit, it bridges several disparate RNA helices of the 16S rRNA. Forms part of the Shine-Dalgarno cleft in the 70S ribosome. The chain is Small ribosomal subunit protein uS11 from Dehalococcoides mccartyi (strain ATCC BAA-2266 / KCTC 15142 / 195) (Dehalococcoides ethenogenes (strain 195)).